The primary structure comprises 361 residues: Protein RecA (361 aa).

77–84 (GPESSGKT) is a binding site for ATP.

It belongs to the RecA family.

The protein resides in the cytoplasm. Functionally, can catalyze the hydrolysis of ATP in the presence of single-stranded DNA, the ATP-dependent uptake of single-stranded DNA by duplex DNA, and the ATP-dependent hybridization of homologous single-stranded DNAs. It interacts with LexA causing its activation and leading to its autocatalytic cleavage. The protein is Protein RecA of Sinorhizobium medicae (strain WSM419) (Ensifer medicae).